The primary structure comprises 162 residues: Protein lon-8 (162 aa).

An N-terminal signal peptide occupies residues 1 to 23 (MRNSRFCAILAVISAISVSYVLA).

The protein localises to the secreted. Secreted protein that is involved in larval elongation, early adult growth and male tail development. The chain is Protein lon-8 from Caenorhabditis elegans.